The primary structure comprises 406 residues: Cysteine desulfurase (406 aa).

An N6-(pyridoxal phosphate)lysine modification is found at K226. The active-site Cysteine persulfide intermediate is C364.

Belongs to the class-V pyridoxal-phosphate-dependent aminotransferase family. Csd subfamily. As to quaternary structure, homodimer. Interacts with SufE and the SufBCD complex composed of SufB, SufC and SufD. The interaction with SufE is required to mediate the direct transfer of the sulfur atom from the S-sulfanylcysteine. The cofactor is pyridoxal 5'-phosphate.

The protein resides in the cytoplasm. The enzyme catalyses (sulfur carrier)-H + L-cysteine = (sulfur carrier)-SH + L-alanine. It carries out the reaction L-selenocysteine + AH2 = hydrogenselenide + L-alanine + A + H(+). The protein operates within cofactor biosynthesis; iron-sulfur cluster biosynthesis. Cysteine desulfurases mobilize the sulfur from L-cysteine to yield L-alanine, an essential step in sulfur metabolism for biosynthesis of a variety of sulfur-containing biomolecules. Component of the suf operon, which is activated and required under specific conditions such as oxidative stress and iron limitation. Acts as a potent selenocysteine lyase in vitro, that mobilizes selenium from L-selenocysteine. Selenocysteine lyase activity is however unsure in vivo. This chain is Cysteine desulfurase, found in Klebsiella pneumoniae (strain 342).